A 204-amino-acid polypeptide reads, in one-letter code: MSPLLVASRNRKKLAELRRVLDAAGVTGLTLVSLDDVAPFEEAPETGAVFEENALAKARDAFAATGLASVADDSGLEVAALNGMPGVLSARWSGRHGDDAANTALLLAQLRDVPDERRAASFVSACALVSASGEVVVRGEWPGRIAREPRGDGGFGYDPVFVPDDAAGRTAAQLSPAEKDAVSHRGRALRLLVPALETLARARG.

8–13 is a substrate binding site; the sequence is SRNRKK. The Proton acceptor role is filled by Asp-73. Mg(2+) is bound at residue Asp-73. Substrate-binding positions include Ser-74, 155 to 158, Lys-179, and 184 to 185; these read FGYD and HR.

It belongs to the HAM1 NTPase family. In terms of assembly, homodimer. Mg(2+) is required as a cofactor.

The catalysed reaction is XTP + H2O = XMP + diphosphate + H(+). It catalyses the reaction dITP + H2O = dIMP + diphosphate + H(+). The enzyme catalyses ITP + H2O = IMP + diphosphate + H(+). Functionally, pyrophosphatase that catalyzes the hydrolysis of nucleoside triphosphates to their monophosphate derivatives, with a high preference for the non-canonical purine nucleotides XTP (xanthosine triphosphate), dITP (deoxyinosine triphosphate) and ITP. Seems to function as a house-cleaning enzyme that removes non-canonical purine nucleotides from the nucleotide pool, thus preventing their incorporation into DNA/RNA and avoiding chromosomal lesions. This is dITP/XTP pyrophosphatase from Mycolicibacterium paratuberculosis (strain ATCC BAA-968 / K-10) (Mycobacterium paratuberculosis).